The sequence spans 88 residues: UPF0250 protein Shew_2940 (88 aa).

It belongs to the UPF0250 family.

The polypeptide is UPF0250 protein Shew_2940 (Shewanella loihica (strain ATCC BAA-1088 / PV-4)).